The following is a 141-amino-acid chain: Nucleoside triphosphatase NudI (141 aa).

Residues 1–141 enclose the Nudix hydrolase domain; that stretch reads MRQRTIVCPL…RHTLRLKGLL (141 aa). Residues 38-59 carry the Nudix box motif; the sequence is GGVEPGERIEEALRREIREELG.

The protein belongs to the Nudix hydrolase family. NudI subfamily. In terms of assembly, monomer. It depends on Mg(2+) as a cofactor.

The enzyme catalyses a ribonucleoside 5'-triphosphate + H2O = a ribonucleoside 5'-phosphate + diphosphate + H(+). It catalyses the reaction a 2'-deoxyribonucleoside 5'-triphosphate + H2O = a 2'-deoxyribonucleoside 5'-phosphate + diphosphate + H(+). The catalysed reaction is dUTP + H2O = dUMP + diphosphate + H(+). It carries out the reaction dTTP + H2O = dTMP + diphosphate + H(+). The enzyme catalyses dCTP + H2O = dCMP + diphosphate + H(+). Catalyzes the hydrolysis of nucleoside triphosphates, with a preference for pyrimidine deoxynucleoside triphosphates (dUTP, dTTP and dCTP). This is Nucleoside triphosphatase NudI from Salmonella arizonae (strain ATCC BAA-731 / CDC346-86 / RSK2980).